Consider the following 397-residue polypeptide: Succinate--CoA ligase [ADP-forming] subunit beta (397 aa).

An ATP-grasp domain is found at K9–Q244. Residues K46, G53 to G55, E99, L102, and E107 each bind ATP. Mg(2+) contacts are provided by N199 and D213. Residues N264 and G321–M323 each bind substrate.

The protein belongs to the succinate/malate CoA ligase beta subunit family. As to quaternary structure, heterotetramer of two alpha and two beta subunits. It depends on Mg(2+) as a cofactor.

The enzyme catalyses succinate + ATP + CoA = succinyl-CoA + ADP + phosphate. It catalyses the reaction GTP + succinate + CoA = succinyl-CoA + GDP + phosphate. Its pathway is carbohydrate metabolism; tricarboxylic acid cycle; succinate from succinyl-CoA (ligase route): step 1/1. Functionally, succinyl-CoA synthetase functions in the citric acid cycle (TCA), coupling the hydrolysis of succinyl-CoA to the synthesis of either ATP or GTP and thus represents the only step of substrate-level phosphorylation in the TCA. The beta subunit provides nucleotide specificity of the enzyme and binds the substrate succinate, while the binding sites for coenzyme A and phosphate are found in the alpha subunit. This Alkaliphilus metalliredigens (strain QYMF) protein is Succinate--CoA ligase [ADP-forming] subunit beta.